A 201-amino-acid polypeptide reads, in one-letter code: Probable nicotinate-nucleotide adenylyltransferase (201 aa).

Belongs to the NadD family.

The enzyme catalyses nicotinate beta-D-ribonucleotide + ATP + H(+) = deamido-NAD(+) + diphosphate. It participates in cofactor biosynthesis; NAD(+) biosynthesis; deamido-NAD(+) from nicotinate D-ribonucleotide: step 1/1. Catalyzes the reversible adenylation of nicotinate mononucleotide (NaMN) to nicotinic acid adenine dinucleotide (NaAD). The protein is Probable nicotinate-nucleotide adenylyltransferase of Neisseria gonorrhoeae (strain ATCC 700825 / FA 1090).